We begin with the raw amino-acid sequence, 114 residues long: Helper of Tim protein 13 (114 aa).

Residues 10 to 90 form a CHY-type; degenerate zinc finger; that stretch reads LVDKESRCEH…DSLQCPNCRS (81 aa). Zn(2+) contacts are provided by Cys17, His19, Cys40, Cys43, Cys67, Cys70, Cys85, and Cys88.

As to quaternary structure, interacts with the small Tim proteins.

The protein resides in the mitochondrion intermembrane space. Its subcellular location is the mitochondrion membrane. Its function is as follows. Required for the assembly or recycling of the small Tim proteins in the mitochondrial intermembrane, thereby participating in the import and insertion of multi-pass transmembrane proteins into the mitochondrial inner membrane. This is Helper of Tim protein 13 (HOT13) from Kluyveromyces lactis (strain ATCC 8585 / CBS 2359 / DSM 70799 / NBRC 1267 / NRRL Y-1140 / WM37) (Yeast).